The following is an 888-amino-acid chain: Leucine--tRNA ligase (888 aa).

The 'HIGH' region motif lies at 43–53 (PYPSGRIHMGH). Residues 644 to 648 (KMSKS) carry the 'KMSKS' region motif. An ATP-binding site is contributed by Lys647.

It belongs to the class-I aminoacyl-tRNA synthetase family.

The protein localises to the cytoplasm. It catalyses the reaction tRNA(Leu) + L-leucine + ATP = L-leucyl-tRNA(Leu) + AMP + diphosphate. The sequence is that of Leucine--tRNA ligase from Rhodopseudomonas palustris (strain BisA53).